Consider the following 216-residue polypeptide: Probable GTP-binding protein EngB (216 aa).

The EngB-type G domain occupies 27–201 (GGVEIAFAGR…AQTLTGWYLA (175 aa)). GTP is bound by residues 35 to 42 (GRSNAGKS), 62 to 66 (GRTQL), 80 to 83 (DLPG), 147 to 150 (TKAD), and 180 to 182 (FSS). Residues Ser-42 and Thr-64 each coordinate Mg(2+).

Belongs to the TRAFAC class TrmE-Era-EngA-EngB-Septin-like GTPase superfamily. EngB GTPase family. The cofactor is Mg(2+).

Functionally, necessary for normal cell division and for the maintenance of normal septation. The sequence is that of Probable GTP-binding protein EngB from Aeromonas hydrophila subsp. hydrophila (strain ATCC 7966 / DSM 30187 / BCRC 13018 / CCUG 14551 / JCM 1027 / KCTC 2358 / NCIMB 9240 / NCTC 8049).